The chain runs to 676 residues: Electrogenic aspartate/glutamate antiporter SLC25A13, mitochondrial (676 aa).

N-acetylalanine is present on Ala-2. The segment at 2–295 (AAAKVALTKR…TLADIERIAP (294 aa)) is regulatory N-terminal domain. The Mitochondrial intermembrane portion of the chain corresponds to 2-332 (AAAKVALTKR…LLQLAESAYR (331 aa)). Lys-18 carries the N6-acetyllysine modification. EF-hand domains follow at residues 51–86 (SQPNPKTVELLSGVVDQTKDGLISFQEFVAFESVLC), 87–122 (APDALFMVAFQLFDKAGKGEVTFEDVKQIFGQTTIH), 123–157 (QHIPFNWDSEFVQLHFGKERKRHLTYAEFTQFLLE), and 158–193 (IQLEHAKQAFVQRDNAKTGKVSAIDFRDIMVTIRPH). Ca(2+) contacts are provided by Asp-66, Thr-68, Asp-70, Leu-72, and Glu-77. Residues 296 to 311 (LEEGMLPFNLAEAQRQ) are linker loop domain. Residues 322–613 (FLLQLAESAY…LQRWFYVDFG (292 aa)) are carrier domain. 3 Solcar repeats span residues 327–419 (AESA…VRDK), 427–511 (VPLL…VKAS), and 519–607 (VSPG…LQRW). The chain crosses the membrane as a helical span at residues 333 to 350 (FGLGSIAGAVGATAVYPI). The Mitochondrial matrix segment spans residues 351–393 (DLVKTRMQNQRSTGSFVGELMYKNSFDCFKKVLRYEGFFGLYR). An N6-acetyllysine mark is found at Lys-354 and Lys-373. Residues 394–413 (GLLPQLLGVAPEKAIKLTVN) form a helical membrane-spanning segment. At 414-436 (DFVRDKFMHKDGSVPLLAEIFAG) the chain is on the mitochondrial intermembrane side. Residues 437 to 450 (GCAGGSQVIFTNPL) form a helical membrane-spanning segment. Residues 451–485 (EIVKIRLQVAGEITTGPRVSALSVVRDLGFFGIYK) are Mitochondrial matrix-facing. Lys-454 is subject to N6-methyllysine. Residue Lys-485 is modified to N6-acetyllysine; alternate. Position 485 is an N6-succinyllysine; alternate (Lys-485). Residues 486-505 (GAKACFLRDIPFSAIYFPCY) traverse the membrane as a helical segment. Residues 506 to 524 (AHVKASFANEDGQVSPGSL) lie on the Mitochondrial intermembrane side of the membrane. A helical membrane pass occupies residues 525-542 (LLAGAIAGMPAASLVTPA). The Mitochondrial matrix segment spans residues 543–581 (DVIKTRLQVAARAGQTTYNGVTDCFRKILREEGPKALWK). Lys-581 bears the N6-succinyllysine mark. Residues 582 to 601 (GVAARVFRSSPQFGVTLLTY) traverse the membrane as a helical segment. The Mitochondrial intermembrane portion of the chain corresponds to 602-676 (ELLQRWFYVD…STSKVTAGDS (75 aa)). Residues 614 to 676 (GVKPVGSEPV…STSKVTAGDS (63 aa)) are C-terminal domain. Residue Lys-663 is modified to N6-acetyllysine. At Ser-667 the chain carries Phosphoserine.

It belongs to the mitochondrial carrier (TC 2.A.29) family. Homodimer (via N-terminus). As to expression, at 10.5 dpc, expressed in branchial arches, a well as in the limb and tail buds. At 13.5 dpc expression is predominant in epithelial structures and the forebrain, kidney and liver. Expression in liver is maintained into adulthood.

It is found in the mitochondrion inner membrane. It carries out the reaction L-aspartate(in) + L-glutamate(out) + H(+)(out) = L-aspartate(out) + L-glutamate(in) + H(+)(in). The catalysed reaction is 3-sulfino-L-alanine(out) + L-glutamate(in) + H(+)(in) = 3-sulfino-L-alanine(in) + L-glutamate(out) + H(+)(out). It catalyses the reaction 3-sulfino-L-alanine(out) + L-aspartate(in) = 3-sulfino-L-alanine(in) + L-aspartate(out). In terms of biological role, mitochondrial electrogenic aspartate/glutamate antiporter that favors efflux of aspartate and entry of glutamate and proton within the mitochondria as part of the malate-aspartate shuttle. Also mediates the uptake of L-cysteinesulfinate (3-sulfino-L-alanine) by mitochondria in exchange of L-glutamate and proton. Can also exchange L-cysteinesulfinate with aspartate in their anionic form without any proton translocation. Lacks transport activity towards gamma-aminobutyric acid (GABA). In Mus musculus (Mouse), this protein is Electrogenic aspartate/glutamate antiporter SLC25A13, mitochondrial.